The following is a 158-amino-acid chain: Serglycin (158 aa).

Residues 1–27 (MMQKLLKCSRLVLALALILVLESSVQG) form the signal peptide. An intrachain disulfide couples Cys-40 to Cys-49. Residues Ser-94 and Ser-96 are each glycosylated (O-linked (Xyl...) (glycosaminoglycan) serine). Tandem repeats lie at residues 94 to 95 (SG), 96 to 97 (SG), 98 to 99 (FG), 100 to 101 (SG), 102 to 103 (SG), 104 to 105 (SG), 106 to 107 (SG), 108 to 109 (SG), and 110 to 111 (SG). The segment at 94 to 111 (SGSGFGSGSGSGSGSGSG) is 9 X 2 AA tandem repeats of [SF]-G. 6 O-linked (Xyl...) (glycosaminoglycan) serine glycosylation sites follow: Ser-100, Ser-102, Ser-104, Ser-106, Ser-108, and Ser-110. Positions 134 to 158 (RSLDRNLPSDSQDLGQHGLEEDFML) are disordered.

The protein belongs to the serglycin family. As to quaternary structure, binds to activated CD44 and to GZMB. In terms of processing, O-glycosylated; contains chondroitin sulfate and heparan sulfate.

It is found in the cytoplasmic granule. Its subcellular location is the cytolytic granule. It localises to the secreted. The protein localises to the extracellular space. The protein resides in the golgi apparatus. In terms of biological role, plays a role in formation of mast cell secretory granules and mediates storage of various compounds in secretory vesicles. Required for storage of some proteases in both connective tissue and mucosal mast cells and for storage of granzyme B in T-lymphocytes. Plays a role in localizing neutrophil elastase in azurophil granules of neutrophils. Mediates processing of MMP2. Plays a role in cytotoxic cell granule-mediated apoptosis by forming a complex with granzyme B which is delivered to cells by perforin to induce apoptosis. Regulates the secretion of TNF-alpha and may also regulate protease secretion. Inhibits bone mineralization. The polypeptide is Serglycin (SRGN) (Homo sapiens (Human)).